The primary structure comprises 427 residues: Cyclic 2,3-diphosphoglycerate synthetase (427 aa).

It belongs to the cyclic 2,3-diphosphoglycerate synthetase family.

The protein localises to the cytoplasm. The enzyme catalyses (2R)-2,3-bisphosphoglycerate + ATP + H(+) = cyclic (2R)-2,3-bisphosphoglycerate + ADP + phosphate. Functionally, catalyzes the formation of cyclic 2,3-diphosphoglycerate (cDPG) by formation of an intramolecular phosphoanhydride bond at the expense of ATP. The sequence is that of Cyclic 2,3-diphosphoglycerate synthetase from Pyrococcus abyssi (strain GE5 / Orsay).